We begin with the raw amino-acid sequence, 482 residues long: Probable glycine dehydrogenase (decarboxylating) subunit 2 (482 aa).

K269 carries the N6-(pyridoxal phosphate)lysine modification.

Belongs to the GcvP family. C-terminal subunit subfamily. In terms of assembly, the glycine cleavage system is composed of four proteins: P, T, L and H. In this organism, the P 'protein' is a heterodimer of two subunits. Pyridoxal 5'-phosphate is required as a cofactor.

The enzyme catalyses N(6)-[(R)-lipoyl]-L-lysyl-[glycine-cleavage complex H protein] + glycine + H(+) = N(6)-[(R)-S(8)-aminomethyldihydrolipoyl]-L-lysyl-[glycine-cleavage complex H protein] + CO2. Its function is as follows. The glycine cleavage system catalyzes the degradation of glycine. The P protein binds the alpha-amino group of glycine through its pyridoxal phosphate cofactor; CO(2) is released and the remaining methylamine moiety is then transferred to the lipoamide cofactor of the H protein. This chain is Probable glycine dehydrogenase (decarboxylating) subunit 2, found in Pelodictyon phaeoclathratiforme (strain DSM 5477 / BU-1).